A 308-amino-acid chain; its full sequence is Ecto-ADP-ribosyltransferase 5 (308 aa).

A signal peptide spans 1-23; it reads MILEDLLMVLSCLALHILWKVQA. An intrachain disulfide couples C43 to C259. The 191-residue stretch at 63-253 folds into the TR mART core domain; sequence ALLRESWEAA…IVTLWSYNQT (191 aa). An NAD(+)-binding site is contributed by Y100. N102 carries N-linked (GlcNAc...) asparagine glycosylation. NAD(+) contacts are provided by R161 and Q181. R161 is a catalytic residue. S184 is a catalytic residue. N197 carries an N-linked (GlcNAc...) asparagine glycan. NAD(+) is bound at residue S215. E222 is an active-site residue. N251 carries an N-linked (GlcNAc...) asparagine glycan.

The protein belongs to the Arg-specific ADP-ribosyltransferase family.

Its subcellular location is the secreted. It is found in the membrane. It carries out the reaction L-arginyl-[protein] + NAD(+) = N(omega)-(ADP-D-ribosyl)-L-arginyl-[protein] + nicotinamide + H(+). This is Ecto-ADP-ribosyltransferase 5 (Art5) from Rattus norvegicus (Rat).